We begin with the raw amino-acid sequence, 365 residues long: MWLQHLSLKTFRNYKETKIDFNPKLNVFLGRNAQGKTNMLEAIYFLALTRSHRTRTDKNLIHFDEEQLHLSGLVQKKTGSIPLEIELTQKGRVTKVNHLKQARLSDYVGHMNVVLFAPEDLQLIKGAPSIRRKFIDMELGQIKPIYLSDLTNYNHILKQRNTYLKSAQKIDETFLSVLDDQLVDYGCRVMNHRLDFIKKLESFGRKKHFELSNQIEELSISYQSSVNITDKQNLSESFKIALEKSRSRDLFKKNTGVGPHRDDISFYINGMDASFGSQGQHRSLVLSIKLAEIELMESITTESPILLLDDVMSELDNTRQLKLLETISQSIQTFITTTSLDHLQNLPENLSIFTIQDGKAAVNGN.

An ATP-binding site is contributed by 30 to 37 (GRNAQGKT).

Belongs to the RecF family.

It localises to the cytoplasm. Its function is as follows. The RecF protein is involved in DNA metabolism; it is required for DNA replication and normal SOS inducibility. RecF binds preferentially to single-stranded, linear DNA. It also seems to bind ATP. This chain is DNA replication and repair protein RecF, found in Streptococcus pneumoniae serotype 4 (strain ATCC BAA-334 / TIGR4).